The chain runs to 853 residues: Transcription factor CPH2 (853 aa).

2 disordered regions span residues 165 to 209 (EPPI…DKNS) and 296 to 353 (NMNP…VHHP). Over residues 180–194 (TTTVSSTNSITNTTK) the composition is skewed to low complexity. Residues 205–274 (KDKNSHNMIE…TKATEYIKHL (70 aa)) enclose the bHLH domain. The span at 301–315 (SLPPPPQQMQAPPQP) shows a compositional bias: pro residues. A compositionally biased stretch (low complexity) spans 330–352 (TPASQYPSPQQQVSPTQQQTVHH).

The protein resides in the nucleus. In terms of biological role, transcription factor that positively controls filamentous growth, virulence, and invasiveness. Binds directly to the two SRE-1-like elements upstream of TEC1 and thus positively regulates expression of this important hyphal growth regulator. Functions independently of known signaling cascades involving EFG1. Also regulates gene expression during intestinal colonization but is not involved in host cell adhesion. This Candida albicans (strain SC5314 / ATCC MYA-2876) (Yeast) protein is Transcription factor CPH2 (CPH2).